Consider the following 261-residue polypeptide: Endomucin (261 aa).

The N-terminal stretch at 1-18 (MELLQVTILFLLPSICSS) is a signal peptide. Residues Asn-19, Asn-28, Asn-98, and Asn-104 are each glycosylated (N-linked (GlcNAc...) asparagine). Residues 19–190 (NSTGVLEAAN…TSATSRSYSS (172 aa)) are Extracellular-facing. 2 stretches are compositionally biased toward polar residues: residues 118–134 (TLQS…SIKT) and 146–171 (ASPS…SQVI). The interval 118-183 (TLQSSKPKTE…EGGKNASTSA (66 aa)) is disordered. Asn-164 and Asn-178 each carry an N-linked (GlcNAc...) asparagine glycan. Residues 191 to 211 (IILPVVIALIVITLSVFVLVG) traverse the membrane as a helical segment. Residues 212 to 261 (LYRMCWKADPGTPENGNDQPQSDKESVKLLTVKTISHESGEHSAQGKTKN) lie on the Cytoplasmic side of the membrane. Ser-237 carries the post-translational modification Phosphoserine.

Post-translationally, highly O-glycosylated. Sialic acid-rich glycoprotein. In terms of tissue distribution, expressed in heart, kidney and lung.

Its subcellular location is the cell membrane. It localises to the membrane. The protein resides in the secreted. Its function is as follows. Endothelial sialomucin, also called endomucin or mucin-like sialoglycoprotein, which interferes with the assembly of focal adhesion complexes and inhibits interaction between cells and the extracellular matrix. This chain is Endomucin (EMCN), found in Homo sapiens (Human).